The sequence spans 210 residues: Thymidylate kinase (210 aa).

Gly-11–Ser-18 serves as a coordination point for ATP.

Belongs to the thymidylate kinase family.

It carries out the reaction dTMP + ATP = dTDP + ADP. Its function is as follows. Phosphorylation of dTMP to form dTDP in both de novo and salvage pathways of dTTP synthesis. This chain is Thymidylate kinase, found in Vibrio parahaemolyticus serotype O3:K6 (strain RIMD 2210633).